Here is a 140-residue protein sequence, read N- to C-terminus: Small ribosomal subunit protein uS8c (140 aa).

It belongs to the universal ribosomal protein uS8 family. Part of the 30S ribosomal subunit.

It is found in the plastid. The protein localises to the chloroplast. In terms of biological role, one of the primary rRNA binding proteins, it binds directly to 16S rRNA central domain where it helps coordinate assembly of the platform of the 30S subunit. In Euglena gracilis, this protein is Small ribosomal subunit protein uS8c (rps8).